We begin with the raw amino-acid sequence, 141 residues long: Hemoglobin subunit alpha (141 aa).

The Globin domain occupies 1–141 (VLSSADKANI…VSTVLTSKYR (141 aa)). Position 3 is a phosphoserine (Ser-3). N6-succinyllysine is present on residues Lys-7 and Lys-11. Lys-16 carries the post-translational modification N6-acetyllysine; alternate. An N6-succinyllysine; alternate modification is found at Lys-16. Residue Tyr-24 is modified to Phosphotyrosine. Lys-40 carries the post-translational modification N6-succinyllysine. A Phosphoserine modification is found at Ser-49. An O2-binding site is contributed by His-58. His-87 contributes to the heme b binding site. Ser-102 is subject to Phosphoserine. A Phosphothreonine modification is found at Thr-108. 2 positions are modified to phosphoserine: Ser-124 and Ser-131. Residues Thr-134 and Thr-137 each carry the phosphothreonine modification. Residue Ser-138 is modified to Phosphoserine.

This sequence belongs to the globin family. Heterotetramer of two alpha chains and two beta chains. As to expression, red blood cells.

Its function is as follows. Involved in oxygen transport from the lung to the various peripheral tissues. Hemopressin acts as an antagonist peptide of the cannabinoid receptor CNR1. Hemopressin-binding efficiently blocks cannabinoid receptor CNR1 and subsequent signaling. The sequence is that of Hemoglobin subunit alpha (HBA) from Proteles cristata (Aardwolf).